A 388-amino-acid polypeptide reads, in one-letter code: Adenosine deaminase-like protein (388 aa).

Over residues Met1–Arg13 the composition is skewed to basic residues. A disordered region spans residues Met1–Asp34. Residues Arg14 to Asp34 show a composition bias toward basic and acidic residues. The Zn(2+) site is built by His65 and His67. N(6)-methyl-AMP is bound by residues His67, His114, Thr146–Lys149, Asp186, and Gly218. His245 contacts Zn(2+). N(6)-methyl-AMP contacts are provided by Glu248, Asp326, and Asp327. The active-site Proton donor is Glu248. Residue Asp326 coordinates Zn(2+).

The protein belongs to the metallo-dependent hydrolases superfamily. Adenosine and AMP deaminases family. Monomer. It depends on Zn(2+) as a cofactor.

It catalyses the reaction N(6)-methyl-AMP + H2O + H(+) = IMP + methylamine. In terms of biological role, catalyzes the hydrolysis of the free cytosolic methylated adenosine nucleotide N(6)-methyl-AMP (N6-mAMP) to produce inositol monophosphate (IMP) and methylamine. Is required for the catabolism of cytosolic N6-mAMP, which is derived from the degradation of mRNA containing N6-methylated adenine (m6A). The sequence is that of Adenosine deaminase-like protein from Caenorhabditis elegans.